The sequence spans 147 residues: Hemoglobin subunit delta (147 aa).

The Globin domain maps to 3 to 147 (NLTAAEKTQV…VANALAHKYH (145 aa)). Positions 64 and 93 each coordinate heme b.

The protein belongs to the globin family. Heterotetramer of two delta chains and two alpha chains. In terms of tissue distribution, red blood cells.

This chain is Hemoglobin subunit delta (HBD), found in Elephas maximus (Indian elephant).